The primary structure comprises 439 residues: Eukaryotic translation initiation factor 2 subunit gamma (439 aa).

Residues 11-215 (QATLNIGTIG…FIVNYIPEPV (205 aa)) form the tr-type G domain. The G1 stretch occupies residues 20–27 (GHVAHGKS). Residue 23 to 28 (AHGKST) participates in GTP binding. The segment at 48–52 (NITIK) is G2. The G3 stretch occupies residues 103–106 (DCPG). GTP is bound by residues 159 to 162 (NKID) and 193 to 195 (AAQ). The segment at 159 to 162 (NKID) is G4. The G5 stretch occupies residues 193–195 (AAQ). Positions 415–427 (GEIKDGTCIEPEY) are interacts with CDC123.

This sequence belongs to the TRAFAC class translation factor GTPase superfamily. Classic translation factor GTPase family. EIF2G subfamily. Eukaryotic translation initiation factor 2 eIF2 is a heterotrimeric complex composed of an alpha, a beta and a gamma subunit. The factors eIF-1, eIF-2, eIF-3, TIF5/eIF-5 and methionyl-tRNAi form a multifactor complex (MFC) that may bind to the 40S ribosome.

It is found in the cytoplasm. The protein localises to the cytosol. The catalysed reaction is GTP + H2O = GDP + phosphate + H(+). In terms of biological role, as a subunit of eukaryotic initiation factor 2 eIF2, involved in the early steps of protein synthesis. In the presence of GTP, eIF-2 forms a ternary complex with initiator tRNA Met-tRNAi and then recruits the 40S ribosomal complex and initiation factors eIF-1, eIF-1A and eIF-3 to form the 43S pre-initiation complex (43S PIC), a step that determines the rate of protein translation. The 43S PIC binds to mRNA and scans downstream to the initiation codon, where it forms a 48S initiation complex by codon-anticodon base pairing. This leads to the displacement of eIF-1 to allow GTPase-activating protein (GAP) eIF-5-mediated hydrolysis of eIF2-bound GTP. Hydrolysis of GTP and release of Pi, which makes GTP hydrolysis irreversible, causes the release of the eIF-2-GDP binary complex from the 40S subunit, an event that is essential for the subsequent joining of the 60S ribosomal subunit to form an elongation-competent 80S ribosome. In order for eIF-2 to recycle and catalyze another round of initiation, the GDP bound to eIF-2 must be exchanged with GTP by way of a reaction catalyzed by GDP-GTP exchange factor (GEF) eIF-2B. This chain is Eukaryotic translation initiation factor 2 subunit gamma, found in Encephalitozoon cuniculi (strain GB-M1) (Microsporidian parasite).